Reading from the N-terminus, the 402-residue chain is Multidrug resistance protein MdtG (402 aa).

Transmembrane regions (helical) follow at residues 14–34, 52–72, 90–110, 113–133, 149–169, 171–191, 219–239, 254–274, 288–308, 318–338, and 376–396; these read LYIV…IMPF, LWTG…APFW, LGMA…QLLI, ALLG…ATQV, AVSG…LYGL, PVFF…LFFV, VICL…VTPI, LAFI…ISAP, VLIF…LVSN, LLGA…LYNI, and AVFY…WISF.

The protein belongs to the major facilitator superfamily. DHA1 family. MdtG (TC 2.A.1.2.20) subfamily.

The protein resides in the cell inner membrane. This Proteus mirabilis (strain HI4320) protein is Multidrug resistance protein MdtG.